The chain runs to 180 residues: Bifunctional protein PyrR (180 aa).

Residues 101-113 (VILVDDVLYTGRT) carry the PRPP-binding motif.

This sequence belongs to the purine/pyrimidine phosphoribosyltransferase family. PyrR subfamily. As to quaternary structure, homodimer and homohexamer; in equilibrium.

It carries out the reaction UMP + diphosphate = 5-phospho-alpha-D-ribose 1-diphosphate + uracil. Its function is as follows. Regulates transcriptional attenuation of the pyrimidine nucleotide (pyr) operon by binding in a uridine-dependent manner to specific sites on pyr mRNA. This disrupts an antiterminator hairpin in the RNA and favors formation of a downstream transcription terminator, leading to a reduced expression of downstream genes. Functionally, also displays a weak uracil phosphoribosyltransferase activity which is not physiologically significant. The chain is Bifunctional protein PyrR from Bacillus cytotoxicus (strain DSM 22905 / CIP 110041 / 391-98 / NVH 391-98).